The primary structure comprises 165 residues: Putative protein FAM86C1P (165 aa).

It belongs to the class I-like SAM-binding methyltransferase superfamily. EEF2KMT family. As to quaternary structure, interacts with EEF2KMT.

This Homo sapiens (Human) protein is Putative protein FAM86C1P.